The sequence spans 344 residues: Anthranilate phosphoribosyltransferase (344 aa).

5-phospho-alpha-D-ribose 1-diphosphate-binding positions include glycine 80, 83-84 (GD), threonine 88, 90-93 (NIST), 108-116 (KHGNRSISS), and serine 120. Glycine 80 contacts anthranilate. Serine 92 is a binding site for Mg(2+). Anthranilate is bound at residue asparagine 111. An anthranilate-binding site is contributed by arginine 166. Residues aspartate 229 and glutamate 230 each contribute to the Mg(2+) site.

Belongs to the anthranilate phosphoribosyltransferase family. As to quaternary structure, homodimer. Mg(2+) serves as cofactor.

It catalyses the reaction N-(5-phospho-beta-D-ribosyl)anthranilate + diphosphate = 5-phospho-alpha-D-ribose 1-diphosphate + anthranilate. It functions in the pathway amino-acid biosynthesis; L-tryptophan biosynthesis; L-tryptophan from chorismate: step 2/5. Functionally, catalyzes the transfer of the phosphoribosyl group of 5-phosphorylribose-1-pyrophosphate (PRPP) to anthranilate to yield N-(5'-phosphoribosyl)-anthranilate (PRA). In Chloroherpeton thalassium (strain ATCC 35110 / GB-78), this protein is Anthranilate phosphoribosyltransferase.